Reading from the N-terminus, the 215-residue chain is Cytochrome b6 (215 aa).

Residues 32–52 (IFYCLGGITLTCFLVQVATGF) form a helical membrane-spanning segment. Cys35 serves as a coordination point for heme c. Heme b contacts are provided by His86 and His100. The next 3 membrane-spanning stretches (helical) occupy residues 90-110 (ASMM…TGGF), 116-136 (LTWV…VTGY), and 186-206 (LHTF…FLMI). Heme b is bound by residues His187 and His202.

This sequence belongs to the cytochrome b family. PetB subfamily. In terms of assembly, the 4 large subunits of the cytochrome b6-f complex are cytochrome b6, subunit IV (17 kDa polypeptide, PetD), cytochrome f and the Rieske protein, while the 4 small subunits are PetG, PetL, PetM and PetN. The complex functions as a dimer. It depends on heme b as a cofactor. Requires heme c as cofactor.

It is found in the plastid. It localises to the chloroplast thylakoid membrane. Its function is as follows. Component of the cytochrome b6-f complex, which mediates electron transfer between photosystem II (PSII) and photosystem I (PSI), cyclic electron flow around PSI, and state transitions. This is Cytochrome b6 from Klebsormidium bilatum (Filamentous green alga).